A 180-amino-acid chain; its full sequence is ATP synthase subunit delta (180 aa).

The protein belongs to the ATPase delta chain family. As to quaternary structure, F-type ATPases have 2 components, F(1) - the catalytic core - and F(0) - the membrane proton channel. F(1) has five subunits: alpha(3), beta(3), gamma(1), delta(1), epsilon(1). F(0) has three main subunits: a(1), b(2) and c(10-14). The alpha and beta chains form an alternating ring which encloses part of the gamma chain. F(1) is attached to F(0) by a central stalk formed by the gamma and epsilon chains, while a peripheral stalk is formed by the delta and b chains.

It localises to the cell inner membrane. F(1)F(0) ATP synthase produces ATP from ADP in the presence of a proton or sodium gradient. F-type ATPases consist of two structural domains, F(1) containing the extramembraneous catalytic core and F(0) containing the membrane proton channel, linked together by a central stalk and a peripheral stalk. During catalysis, ATP synthesis in the catalytic domain of F(1) is coupled via a rotary mechanism of the central stalk subunits to proton translocation. Functionally, this protein is part of the stalk that links CF(0) to CF(1). It either transmits conformational changes from CF(0) to CF(1) or is implicated in proton conduction. The chain is ATP synthase subunit delta from Geobacter sp. (strain M21).